The following is a 79-amino-acid chain: Protein RALF-like 35 (79 aa).

The first 29 residues, 1–29 (MAAHKMSLTSLFFVSIVIVLSLFSGFGEG), serve as a signal peptide directing secretion. Cystine bridges form between cysteine 45/cysteine 52 and cysteine 66/cysteine 72. Asparagine 68 carries N-linked (GlcNAc...) asparagine glycosylation.

This sequence belongs to the plant rapid alkalinization factor (RALF) family.

It localises to the secreted. Its function is as follows. Cell signaling peptide that may regulate plant stress, growth, and development. Mediates a rapid alkalinization of extracellular space by mediating a transient increase in the cytoplasmic Ca(2+) concentration leading to a calcium-dependent signaling events through a cell surface receptor and a concomitant activation of some intracellular mitogen-activated protein kinases. The polypeptide is Protein RALF-like 35 (Arabidopsis thaliana (Mouse-ear cress)).